Consider the following 165-residue polypeptide: Phosphopantetheine adenylyltransferase (165 aa).

Belongs to the eukaryotic CoaD family.

The protein localises to the cytoplasm. The enzyme catalyses (R)-4'-phosphopantetheine + ATP + H(+) = 3'-dephospho-CoA + diphosphate. It functions in the pathway cofactor biosynthesis; coenzyme A biosynthesis. Its function is as follows. Reversibly transfers an adenylyl group from ATP to 4'-phosphopantetheine, yielding dephospho-CoA (dPCoA) and pyrophosphate. The sequence is that of Phosphopantetheine adenylyltransferase from Thermococcus kodakarensis (strain ATCC BAA-918 / JCM 12380 / KOD1) (Pyrococcus kodakaraensis (strain KOD1)).